Consider the following 293-residue polypeptide: tRNA pseudouridine synthase B (293 aa).

The active-site Nucleophile is D38.

This sequence belongs to the pseudouridine synthase TruB family. Type 1 subfamily.

The catalysed reaction is uridine(55) in tRNA = pseudouridine(55) in tRNA. Responsible for synthesis of pseudouridine from uracil-55 in the psi GC loop of transfer RNAs. This Nostoc sp. (strain PCC 7120 / SAG 25.82 / UTEX 2576) protein is tRNA pseudouridine synthase B.